A 174-amino-acid polypeptide reads, in one-letter code: MNSLLIMGYTSFDLGIFNEKDIKVSIIKKTIRRKLINFLEEGLRWVIFTGNLGFEYWALEVAKELQTDYEFQIGTIFPFETHGQNWNENNQIKLASFKQVDFVKYAFEAYENPGQFRQYNEFLLENTEGSFVFYDEENETKLKNMVEKMKQSSNYEVYLLNFEDLQEIFEEMND.

This sequence belongs to the UPF0398 family.

The chain is UPF0398 protein LACR_0544 from Lactococcus lactis subsp. cremoris (strain SK11).